The chain runs to 129 residues: Transcription antitermination protein NusB (129 aa).

Belongs to the NusB family.

Its function is as follows. Involved in transcription antitermination. Required for transcription of ribosomal RNA (rRNA) genes. Binds specifically to the boxA antiterminator sequence of the ribosomal RNA (rrn) operons. The polypeptide is Transcription antitermination protein NusB (Bacillus licheniformis (strain ATCC 14580 / DSM 13 / JCM 2505 / CCUG 7422 / NBRC 12200 / NCIMB 9375 / NCTC 10341 / NRRL NRS-1264 / Gibson 46)).